A 388-amino-acid polypeptide reads, in one-letter code: Leucine aminopeptidase 1 (388 aa).

A signal peptide spans 1 to 19 (MKSLSLLALAAIAPPAAVA). The propeptide occupies 20 to 88 (AVVDRQVPFE…SAKSHERIQV (69 aa)). A glycan (N-linked (GlcNAc...) asparagine) is linked at N180. 4 residues coordinate Zn(2+): H188, D207, E246, and D273. The cysteines at positions 322 and 326 are disulfide-linked. H355 contacts Zn(2+).

It belongs to the peptidase M28 family. M28E subfamily. In terms of assembly, monomer. The cofactor is Zn(2+).

The protein resides in the secreted. In terms of biological role, extracellular aminopeptidase that allows assimilation of proteinaceous substrates. This is Leucine aminopeptidase 1 (LAP1) from Coccidioides posadasii (strain C735) (Valley fever fungus).